The sequence spans 1068 residues: Target of Nesh-SH3 (1068 aa).

A signal peptide spans 1 to 21; sequence MLSSLGCLLLCGSITLALGNA. N37 carries an N-linked (GlcNAc...) asparagine glycan. In terms of domain architecture, Fibronectin type-III 1 spans 116 to 214; the sequence is KPLQLVVGTL…KIFNHKTVVG (99 aa). 2 disordered regions span residues 315–351 and 384–811; these read SKTPEVEKISARPTTVTPETVPRSTKPTTSSALDVSE and VFSS…SITD. Low complexity predominate over residues 326 to 339; it reads RPTTVTPETVPRST. Positions 340–351 are enriched in polar residues; sequence KPTTSSALDVSE. Residues 447 to 462 show a composition bias toward low complexity; the sequence is QPTTPAPQQTTSIPST. The segment covering 463–473 has biased composition (basic residues); that stretch reads PKRRPRPKPPR. Positions 482 to 499 are enriched in polar residues; that stretch reads AGTITPKISKSPEPTWTT. Positions 532–544 are enriched in pro residues; it reads RAPPKPKTSPRPR. The span at 562-574 shows a compositional bias: polar residues; that stretch reads PKTSPSPEVSYTT. Composition is skewed to low complexity over residues 603-631 and 737-750; these read IPFIPMISPSPSQEELQTTLEETDQSTQE and PPLRSTPRPTGTPL. A compositionally biased stretch (polar residues) spans 802 to 811; that stretch reads PDNSPCSITD. In terms of domain architecture, Fibronectin type-III 2 spans 833 to 926; that stretch reads PPTNLTVVTV…NTVAFSTESA (94 aa).

Probably interacts with ABI3. As to expression, expressed in brain, heart, lung, liver, pancreas kidney and placenta.

It localises to the secreted. The chain is Target of Nesh-SH3 from Homo sapiens (Human).